A 211-amino-acid polypeptide reads, in one-letter code: MNVDDLTFDDKGLIPAVVQDAQSKEVVTVAYMNRESFEKTVETGETWFYSRSRQELWHKGATSGHTQKVVDIRYDCDGDALVVLVELKGPACHTGKYSCFFESVFGKKIYGASDRFGIIATLEALIAEREAEMPEGAYTTYLFEKGVDKILKKVGEEATEVVIAAKNRDAEELKWEVADLLYHLLVLLREQKLPVDEVLAVLEERHRPKEE.

Positions Met1 to Ile118 are phosphoribosyl-AMP cyclohydrolase. A phosphoribosyl-ATP pyrophosphohydrolase region spans residues Ile119–Glu211.

The protein in the N-terminal section; belongs to the PRA-CH family. It in the C-terminal section; belongs to the PRA-PH family.

Its subcellular location is the cytoplasm. It catalyses the reaction 1-(5-phospho-beta-D-ribosyl)-ATP + H2O = 1-(5-phospho-beta-D-ribosyl)-5'-AMP + diphosphate + H(+). The enzyme catalyses 1-(5-phospho-beta-D-ribosyl)-5'-AMP + H2O = 1-(5-phospho-beta-D-ribosyl)-5-[(5-phospho-beta-D-ribosylamino)methylideneamino]imidazole-4-carboxamide. Its pathway is amino-acid biosynthesis; L-histidine biosynthesis; L-histidine from 5-phospho-alpha-D-ribose 1-diphosphate: step 2/9. The protein operates within amino-acid biosynthesis; L-histidine biosynthesis; L-histidine from 5-phospho-alpha-D-ribose 1-diphosphate: step 3/9. The polypeptide is Histidine biosynthesis bifunctional protein HisIE (hisI) (Halalkalibacterium halodurans (strain ATCC BAA-125 / DSM 18197 / FERM 7344 / JCM 9153 / C-125) (Bacillus halodurans)).